We begin with the raw amino-acid sequence, 346 residues long: MSADFWCSSQRNKWQLSRQSLLEARRKVLLLERKMIQNGLIKDYPNIHYDFNMRIYLHNLLIKLGRRLNIRQVALATAEIYLNRFLTRVSLKEINVYLLVTTCLYVACKIEECPQHIRLIISEARNLWPEYIPHDVTKLAEFEFYLIEEMDSYLFLHHPYKSLIQIRDFLNENSAVFGFTLTDDELQNAWSLVNDSYITDLHLLLPPHIIAVASIYITIVLKKNLSAIRVNSSAVNSNGGPNSMMFNRNPDQNSMHIDDLMILANPSTPGSDLVNNLERTNFHDMKLDEETIKINKFMNFLDHSHINLDEVVEAMQDMINIYVQWNRYNEQGVKKALQVMLLNRQL.

One can recognise a Cyclin N-terminal domain in the interval 59–158 (NLLIKLGRRL…EMDSYLFLHH (100 aa)).

This sequence belongs to the cyclin family. Cyclin C subfamily. As to quaternary structure, component of the SRB8-11 complex, a regulatory module of the Mediator complex.

It is found in the nucleus. Functionally, component of the SRB8-11 complex. The SRB8-11 complex is a regulatory module of the Mediator complex which is itself involved in regulation of basal and activated RNA polymerase II-dependent transcription. The SRB8-11 complex may be involved in the transcriptional repression of a subset of genes regulated by Mediator. It may inhibit the association of the Mediator complex with RNA polymerase II to form the holoenzyme complex. The SRB8-11 complex phosphorylates the C-terminal domain (CTD) of the largest subunit of RNA polymerase II. The sequence is that of RNA polymerase II holoenzyme cyclin-like subunit (SSN8) from Scheffersomyces stipitis (strain ATCC 58785 / CBS 6054 / NBRC 10063 / NRRL Y-11545) (Yeast).